The chain runs to 341 residues: Mitochondrial transcription factor 1 (341 aa).

Residues Leu-23, Glu-77, Asp-101, and Asn-137 each coordinate S-adenosyl-L-methionine.

Belongs to the class I-like SAM-binding methyltransferase superfamily. rRNA adenine N(6)-methyltransferase family.

The protein resides in the mitochondrion. Functionally, mitochondrial transcription factor that confers selective promoter recognition on the core subunit of the yeast mitochondrial RNA polymerase. Interacts with DNA in a non-specific manner. The sequence is that of Mitochondrial transcription factor 1 (MTF1) from Saccharomyces paradoxus (Yeast).